The primary structure comprises 194 residues: RxLR effector protein Avh240 (194 aa).

A signal peptide spans 1–23; it reads MRPYFTLLLALAFILACTNLVEA. Positions 38 to 57 match the RxLR-dEER motif; the sequence is RHLRTAVASVVDLPDDEDER. The interval 58-108 is host plasma membrane-binding; that stretch reads LLGYNTVQLWRMRRTANKLMNGKLTTQKEAALKKWMASQQDKFLAKWLKSS.

The protein belongs to the RxLR effector family. Homodimer. Interacts with host soybean aspartic protease AP1.

It is found in the secreted. Its subcellular location is the host cell membrane. In terms of biological role, effector that suppresses plant defense responses during the early stages of pathogen infection. Suppresses cell death induced by effectors and PAMPs in plant hosts. Avh240 dimerizes and localizes at the plasma membrane to interfere with aspartic protease AP1 secretion, which presents an effective mechanism by which effector proteins suppress plant apoplastic immunity. In Phytophthora sojae (Soybean stem and root rot agent), this protein is RxLR effector protein Avh240.